We begin with the raw amino-acid sequence, 432 residues long: Adenylosuccinate synthetase (432 aa).

GTP is bound by residues 13–19 (GDEGKGK) and 41–43 (GHT). Residue Asp-14 is the Proton acceptor of the active site. 2 residues coordinate Mg(2+): Asp-14 and Gly-41. Residues 14-17 (DEGK), 39-42 (NAGH), Thr-130, Arg-144, Gln-225, Thr-240, and Arg-304 each bind IMP. His-42 acts as the Proton donor in catalysis. 300–306 (AVTGRPR) serves as a coordination point for substrate. GTP contacts are provided by residues Arg-306, 332–334 (KLD), and 415–417 (STG).

The protein belongs to the adenylosuccinate synthetase family. Homodimer. Requires Mg(2+) as cofactor.

The protein resides in the cytoplasm. It carries out the reaction IMP + L-aspartate + GTP = N(6)-(1,2-dicarboxyethyl)-AMP + GDP + phosphate + 2 H(+). It functions in the pathway purine metabolism; AMP biosynthesis via de novo pathway; AMP from IMP: step 1/2. Functionally, plays an important role in the de novo pathway of purine nucleotide biosynthesis. Catalyzes the first committed step in the biosynthesis of AMP from IMP. This chain is Adenylosuccinate synthetase, found in Haemophilus influenzae (strain ATCC 51907 / DSM 11121 / KW20 / Rd).